The chain runs to 648 residues: Threonine--tRNA ligase (648 aa).

Residues 1–61 enclose the TGS domain; that stretch reads MIDIILPDGS…INTATVKAIT (61 aa). Residues 243-549 form a catalytic region; it reads DHRKLGRELE…LIEHYSGRLP (307 aa). Zn(2+) contacts are provided by Cys349, His400, and His526.

It belongs to the class-II aminoacyl-tRNA synthetase family. In terms of assembly, homodimer. Zn(2+) serves as cofactor.

Its subcellular location is the cytoplasm. The catalysed reaction is tRNA(Thr) + L-threonine + ATP = L-threonyl-tRNA(Thr) + AMP + diphosphate + H(+). Functionally, catalyzes the attachment of threonine to tRNA(Thr) in a two-step reaction: L-threonine is first activated by ATP to form Thr-AMP and then transferred to the acceptor end of tRNA(Thr). Also edits incorrectly charged L-seryl-tRNA(Thr). The sequence is that of Threonine--tRNA ligase from Orientia tsutsugamushi (strain Boryong) (Rickettsia tsutsugamushi).